The chain runs to 129 residues: Small ribosomal subunit protein uS11 (129 aa).

This sequence belongs to the universal ribosomal protein uS11 family. In terms of assembly, part of the 30S ribosomal subunit. Interacts with proteins S7 and S18. Binds to IF-3.

In terms of biological role, located on the platform of the 30S subunit, it bridges several disparate RNA helices of the 16S rRNA. Forms part of the Shine-Dalgarno cleft in the 70S ribosome. In Levilactobacillus brevis (strain ATCC 367 / BCRC 12310 / CIP 105137 / JCM 1170 / LMG 11437 / NCIMB 947 / NCTC 947) (Lactobacillus brevis), this protein is Small ribosomal subunit protein uS11.